The primary structure comprises 67 residues: Ranatuerin-2Vb (67 aa).

The N-terminal stretch at 1–22 (MFTLKKSFLLLFFLGTITLSLC) is a signal peptide. A propeptide spanning residues 23 to 39 (EEERGADDDDGEEEVKR) is cleaved from the precursor. Residues Cys-62 and Cys-67 are joined by a disulfide bond.

In terms of tissue distribution, expressed by the skin glands.

The protein resides in the secreted. Functionally, antimicrobial peptide. The polypeptide is Ranatuerin-2Vb (Odorrana versabilis (Chinese bamboo leaf odorous frog)).